We begin with the raw amino-acid sequence, 112 residues long: Protein BEX5 (112 aa).

2 stretches are compositionally biased toward basic and acidic residues: residues 1 to 12 (MEKDPKERREEE) and 30 to 51 (PKPR…REDM). The segment at 1-56 (MEKDPKERREEEQAPVQNEEACPMGGGEGPKPRENVRGDWDPPAQDFREDMPNGLV) is disordered. The tract at residues 101–105 (HHDHH) is his cluster. Cys109 is a Zn(2+) binding site.

It belongs to the BEX family. Ubiquitinated. Degraded by the proteasome.

It is found in the cytoplasm. In Bos taurus (Bovine), this protein is Protein BEX5 (BEX5).